Reading from the N-terminus, the 476-residue chain is Serine/threonine-protein kinase WAG1 (476 aa).

One can recognise a Protein kinase domain in the interval 93-400 (FKLVRHLGTG…AQDIKRHEFF (308 aa)). ATP is bound by residues 99–107 (LGTGNLGRV) and Lys-124. Asp-219 (proton acceptor) is an active-site residue.

The protein belongs to the protein kinase superfamily. Ser/Thr protein kinase family. In terms of tissue distribution, expressed in root tips and lateral root primordia.

Its subcellular location is the cytoplasm. The protein localises to the cytosol. The catalysed reaction is L-seryl-[protein] + ATP = O-phospho-L-seryl-[protein] + ADP + H(+). The enzyme catalyses L-threonyl-[protein] + ATP = O-phospho-L-threonyl-[protein] + ADP + H(+). Serine/threonine-protein kinase involved in the regulation of auxin signaling. Acts as a positive regulator of cellular auxin efflux and regulates organ development by enhancing PIN-mediated polar auxin transport. Phosphorylates conserved serine residues in the PIN auxin efflux carriers. Phosphorylation of PIN proteins is required and sufficient for apical-basal PIN polarity that enables directional intercellular auxin fluxes, which mediate differential growth, tissue patterning and organogenesis. Acts as a suppressor of root waving. The chain is Serine/threonine-protein kinase WAG1 (WAG1) from Arabidopsis thaliana (Mouse-ear cress).